The primary structure comprises 486 residues: Uridine/cytidine kinase UKL1, chloroplastic (486 aa).

Residues 1 to 47 constitute a chloroplast transit peptide; that stretch reads MPEDSSSLDYAMEKASGPHFSGLRFDGLLSSSPPNSSVVSSLRSAVS. Over residues 31–54 the composition is skewed to low complexity; the sequence is SSPPNSSVVSSLRSAVSSSSPSSS. The segment at 31–67 is disordered; the sequence is SSPPNSSVVSSLRSAVSSSSPSSSDPEAPKQPFIIGV. The tract at residues 59-264 is uridine kinase; the sequence is PKQPFIIGVS…ITQHIHTKLG (206 aa). Residues 274 to 486 are uracil phosphoribosyltransferase; it reads NVYVIQSTFQ…RYFGTDEEDQ (213 aa). GTP is bound by residues Lys-298, Arg-307, and 341–344; that span reads CKKL. 2 residues coordinate 5-phospho-alpha-D-ribose 1-diphosphate: Arg-351 and Arg-376. Position 396 (Arg-396) interacts with GTP. Residues Asp-402, 407-410, and Glu-473 contribute to the 5-phospho-alpha-D-ribose 1-diphosphate site; that span reads TGNS. Residue 472 to 474 participates in uracil binding; sequence GEF.

The protein in the N-terminal section; belongs to the uridine kinase family. In the C-terminal section; belongs to the UPRTase family. Expressed in roots, leaves and stems.

It localises to the plastid. The protein resides in the chloroplast. It is found in the cytoplasm. The enzyme catalyses cytidine + ATP = CMP + ADP + H(+). The catalysed reaction is uridine + ATP = UMP + ADP + H(+). Its pathway is pyrimidine metabolism; CTP biosynthesis via salvage pathway; CTP from cytidine: step 1/3. The protein operates within pyrimidine metabolism; UMP biosynthesis via salvage pathway; UMP from uridine: step 1/1. In terms of biological role, involved in the pyrimidine salvage pathway. Phosphorylates uridine to uridine monophosphate (UMP). Phosphorylates cytidine to cytidine monophosphate (CMP). Does not possess uracil phosphoribosyltransferase (UPRTase) activity that catalyzes the conversion of uracil and 5-phospho-alpha-D-ribose 1-diphosphate (PRPP) to UMP and diphosphate. The chain is Uridine/cytidine kinase UKL1, chloroplastic from Arabidopsis thaliana (Mouse-ear cress).